A 426-amino-acid polypeptide reads, in one-letter code: UPF0597 protein CLB_1750 (426 aa).

Belongs to the UPF0597 family.

The polypeptide is UPF0597 protein CLB_1750 (Clostridium botulinum (strain ATCC 19397 / Type A)).